The sequence spans 259 residues: Small ribosomal subunit protein uS2 (259 aa).

The protein belongs to the universal ribosomal protein uS2 family.

The protein is Small ribosomal subunit protein uS2 of Dinoroseobacter shibae (strain DSM 16493 / NCIMB 14021 / DFL 12).